The primary structure comprises 300 residues: 7-methylguanosine phosphate-specific 5'-nucleotidase (300 aa).

Asp-41 (nucleophile) is an active-site residue. Mg(2+) is bound by residues Asp-41 and Asp-43. The active-site Proton donor is the Asp-43. Glu-88 provides a ligand contact to CMP. Glu-88 serves as a coordination point for N(7)-methyl-GMP. Substrate-binding positions include 156 to 157 (SA) and Lys-205. Asp-230 is a Mg(2+) binding site. At Lys-256 the chain carries N6-acetyllysine.

It belongs to the pyrimidine 5'-nucleotidase family. As to quaternary structure, monomer.

It localises to the cytoplasm. It carries out the reaction N(7)-methyl-GMP + H2O = N(7)-methylguanosine + phosphate. The enzyme catalyses CMP + H2O = cytidine + phosphate. The catalysed reaction is a ribonucleoside 5'-phosphate + H2O = a ribonucleoside + phosphate. Its function is as follows. Specifically hydrolyzes 7-methylguanosine monophosphate (m(7)GMP) to 7-methylguanosine and inorganic phosphate. The specific activity for m(7)GMP may protect cells against undesired salvage of m(7)GMP and its incorporation into nucleic acids. Also has weak activity for CMP. UMP and purine nucleotides are poor substrates. This Mus musculus (Mouse) protein is 7-methylguanosine phosphate-specific 5'-nucleotidase (Nt5c3b).